The following is a 309-amino-acid chain: Protein FdhE homolog (309 aa).

It belongs to the FdhE family.

It localises to the cytoplasm. Functionally, necessary for formate dehydrogenase activity. The sequence is that of Protein FdhE homolog from Pectobacterium atrosepticum (strain SCRI 1043 / ATCC BAA-672) (Erwinia carotovora subsp. atroseptica).